The following is a 301-amino-acid chain: Phosphatidylcholine:diacylglycerol cholinephosphotransferase 1 (301 aa).

Residues 1–39 (MSAAAAETDVSLRRRSNSLNGNHTNGVAIDGTLDNNNRR) form a disordered region. Transmembrane regions (helical) follow at residues 88–108 (HWIP…EYTL), 141–161 (VLAA…VWTW), 171–191 (IAAL…QLPL), 202–222 (FPVG…GSMI), and 255–275 (GHYT…DSLA). Active-site residues include His216, His256, and Asp260.

This sequence belongs to the phosphatidylcholine:diacylglycerol cholinephosphotransferase family.

The protein localises to the membrane. It catalyses the reaction 1,2-ditetradecanoyl-sn-glycero-3-phosphocholine + 1,2-di-(9Z-octadecenoyl)-sn-glycerol = 1,2-ditetradecanoyl-sn-glycerol + 1,2-di-(9Z-octadecenoyl)-sn-glycero-3-phosphocholine. Functionally, functions as a phosphatidylcholine:diacylglycerol cholinephosphotransferase that catalyzes the transfer of the phosphocholine headgroup from phosphatidylcholine (PC) to diacylglycerol, a major reaction for the transfer of 18:1 into phosphatidylcholine for desaturation and also for the reverse transfer of 18:2 and 18:3 into the triacylglycerols synthesis pathway. This chain is Phosphatidylcholine:diacylglycerol cholinephosphotransferase 1, found in Arabidopsis thaliana (Mouse-ear cress).